The chain runs to 525 residues: EGF domain-specific O-linked N-acetylglucosamine transferase (525 aa).

The signal sequence occupies residues 1–24 (MVPLRLVLLLHIIHFSCENEVGSA). Residues 293 to 295 (DYE) carry the Required for optimal activity motif. An N-linked (GlcNAc...) asparagine glycan is attached at Asn352. Positions 522 to 525 (RDEL) match the Prevents secretion from ER motif.

Belongs to the glycosyltransferase 61 family.

The protein resides in the endoplasmic reticulum lumen. It catalyses the reaction L-seryl-[protein] + UDP-N-acetyl-alpha-D-glucosamine = 3-O-(N-acetyl-beta-D-glucosaminyl)-L-seryl-[protein] + UDP + H(+). The enzyme catalyses L-threonyl-[protein] + UDP-N-acetyl-alpha-D-glucosamine = 3-O-(N-acetyl-beta-D-glucosaminyl)-L-threonyl-[protein] + UDP + H(+). Catalyzes the transfer of a single N-acetylglucosamine from UDP-GlcNAc to a serine or threonine residue in extracellular proteins resulting in their modification with a beta-linked N-acetylglucosamine (O-GlcNAc). Specifically glycosylates the Thr residue located between the fifth and sixth conserved cysteines of folded EGF-like domains. The protein is EGF domain-specific O-linked N-acetylglucosamine transferase (eogt) of Xenopus laevis (African clawed frog).